Here is a 288-residue protein sequence, read N- to C-terminus: Acetyl-coenzyme A carboxylase carboxyl transferase subunit beta (288 aa).

Positions Leu-34 to Gln-288 constitute a CoA carboxyltransferase N-terminal domain. Positions 38, 41, 56, and 59 each coordinate Zn(2+). The segment at Cys-38 to Cys-59 adopts a C4-type zinc-finger fold.

The protein belongs to the AccD/PCCB family. In terms of assembly, acetyl-CoA carboxylase is a heterohexamer composed of biotin carboxyl carrier protein (AccB), biotin carboxylase (AccC) and two subunits each of ACCase subunit alpha (AccA) and ACCase subunit beta (AccD). Zn(2+) is required as a cofactor.

The protein localises to the cytoplasm. It carries out the reaction N(6)-carboxybiotinyl-L-lysyl-[protein] + acetyl-CoA = N(6)-biotinyl-L-lysyl-[protein] + malonyl-CoA. It participates in lipid metabolism; malonyl-CoA biosynthesis; malonyl-CoA from acetyl-CoA: step 1/1. Component of the acetyl coenzyme A carboxylase (ACC) complex. Biotin carboxylase (BC) catalyzes the carboxylation of biotin on its carrier protein (BCCP) and then the CO(2) group is transferred by the transcarboxylase to acetyl-CoA to form malonyl-CoA. This chain is Acetyl-coenzyme A carboxylase carboxyl transferase subunit beta, found in Streptococcus pyogenes serotype M6 (strain ATCC BAA-946 / MGAS10394).